A 250-amino-acid polypeptide reads, in one-letter code: MTNLAQKLRYGTQQSHTLAENTAYMKCFLKGIVEREPFRQLLANLYYLYSALEAALRQHRDNEIISAIYFPELNRTDKLAEDLTYYYGPNWQQIIQPTPCAKIYVDRLKTIAASEPELLIAHCYTRYLGDLSGGQSLKNIIRSALQLPEGEGTAMYEFDSLPTPGDRRQFKEIYRDVLNSLPLDEATINRIVEEANYAFSLNREVMHDLEDLIKAAIGEHTFDLLTRQDRPGSTEARSTAGHPITLMVGE.

His16 contacts heme b. Residues 228–250 (QDRPGSTEARSTAGHPITLMVGE) are disordered.

The protein belongs to the heme oxygenase family. In terms of assembly, homodimer.

It catalyses the reaction heme b + 3 reduced [NADPH--hemoprotein reductase] + 3 O2 = biliverdin IXalpha + CO + Fe(2+) + 3 oxidized [NADPH--hemoprotein reductase] + 3 H2O + H(+). Its function is as follows. Catalyzes the opening of the heme ring with the release of iron. Key enzyme in the synthesis of the chromophoric part of the photosynthetic antennae. The polypeptide is Heme oxygenase 2 (pbsA2) (Synechocystis sp. (strain ATCC 27184 / PCC 6803 / Kazusa)).